We begin with the raw amino-acid sequence, 282 residues long: Putative hydrolase Bcep18194_B0137 (282 aa).

The Mg(2+) site is built by Glu-124, Glu-126, and Asp-155.

The protein belongs to the FAH family. Mg(2+) is required as a cofactor.

This is Putative hydrolase Bcep18194_B0137 from Burkholderia lata (strain ATCC 17760 / DSM 23089 / LMG 22485 / NCIMB 9086 / R18194 / 383).